The sequence spans 156 residues: 6,7-dimethyl-8-ribityllumazine synthase (156 aa).

5-amino-6-(D-ribitylamino)uracil contacts are provided by residues F23, 57–59 (AYE), and 81–83 (AII). 86–87 (ST) contacts (2S)-2-hydroxy-3-oxobutyl phosphate. H89 (proton donor) is an active-site residue. Position 114 (F114) interacts with 5-amino-6-(D-ribitylamino)uracil. R128 serves as a coordination point for (2S)-2-hydroxy-3-oxobutyl phosphate.

Belongs to the DMRL synthase family.

The catalysed reaction is (2S)-2-hydroxy-3-oxobutyl phosphate + 5-amino-6-(D-ribitylamino)uracil = 6,7-dimethyl-8-(1-D-ribityl)lumazine + phosphate + 2 H2O + H(+). The protein operates within cofactor biosynthesis; riboflavin biosynthesis; riboflavin from 2-hydroxy-3-oxobutyl phosphate and 5-amino-6-(D-ribitylamino)uracil: step 1/2. In terms of biological role, catalyzes the formation of 6,7-dimethyl-8-ribityllumazine by condensation of 5-amino-6-(D-ribitylamino)uracil with 3,4-dihydroxy-2-butanone 4-phosphate. This is the penultimate step in the biosynthesis of riboflavin. In Campylobacter hominis (strain ATCC BAA-381 / DSM 21671 / CCUG 45161 / LMG 19568 / NCTC 13146 / CH001A), this protein is 6,7-dimethyl-8-ribityllumazine synthase.